Here is a 914-residue protein sequence, read N- to C-terminus: Neutral alpha-glucosidase C (914 aa).

The Nucleophile role is filled by Asp-511. Glu-514 is a catalytic residue. Residue Asp-587 is the Proton donor of the active site.

This sequence belongs to the glycosyl hydrolase 31 family.

The enzyme catalyses Hydrolysis of terminal, non-reducing (1-&gt;4)-linked alpha-D-glucose residues with release of alpha-D-glucose.. Functionally, has alpha-glucosidase activity. This chain is Neutral alpha-glucosidase C (GANC), found in Homo sapiens (Human).